Here is a 722-residue protein sequence, read N- to C-terminus: Mesentericin-Y105 transport/processing ATP-binding protein MesD (722 aa).

The Peptidase C39 domain occupies 16-143 (QVDERDCGVA…EEWTGVSIFI (128 aa)). Cysteine 22 is an active-site residue. Helical transmembrane passes span 171–191 (LLVINIVIAALLVTLVSILGS), 210–230 (LGIVSLGLIFAYVIQQLLSYA), 242–262 (LSIDIILSYIKHIFELPMSFF), 287–307 (TMLSVFLDLGILVIVGTVLVV), 311–331 (TLFLISLIAIPAYALVVWLFM), 401–421 (SLLQLSLNVVILWVGAQLVMT), 429–449 (LITYNALLGFFTDPLQNIINL), and 518–538 (IALVGISGSGKSTLVKLLVNF). An ABC transmembrane type-1 domain is found at 173-455 (VINIVIAALL…IINLQTKLQQ (283 aa)). Residues 489-722 (LVADHITYKY…GGFYASLFNH (234 aa)) enclose the ABC transporter domain. 522–529 (GISGSGKS) is a binding site for ATP.

Belongs to the ABC transporter superfamily.

It localises to the cell membrane. Its function is as follows. Involved in the export process of the bacteriocin mesentericin-Y105. The chain is Mesentericin-Y105 transport/processing ATP-binding protein MesD (mesD) from Leuconostoc mesenteroides.